The chain runs to 329 residues: NADH-quinone oxidoreductase subunit H (329 aa).

Transmembrane regions (helical) follow at residues 9–29, 79–99, 117–137, 162–182, 188–208, 243–263, 269–289, and 309–329; these read ILKV…LTYV, IAPV…PFFP, VGIL…LLAG, VSGL…LIEI, GGIF…FLIA, FFIG…LLFF, LWFI…LFLF, and WKVL…VLIL.

The protein belongs to the complex I subunit 1 family. NDH-1 is composed of 14 different subunits. Subunits NuoA, H, J, K, L, M, N constitute the membrane sector of the complex.

Its subcellular location is the cell inner membrane. It carries out the reaction a quinone + NADH + 5 H(+)(in) = a quinol + NAD(+) + 4 H(+)(out). In terms of biological role, NDH-1 shuttles electrons from NADH, via FMN and iron-sulfur (Fe-S) centers, to quinones in the respiratory chain. The immediate electron acceptor for the enzyme in this species is believed to be ubiquinone. Couples the redox reaction to proton translocation (for every two electrons transferred, four hydrogen ions are translocated across the cytoplasmic membrane), and thus conserves the redox energy in a proton gradient. This subunit may bind ubiquinone. In Wolinella succinogenes (strain ATCC 29543 / DSM 1740 / CCUG 13145 / JCM 31913 / LMG 7466 / NCTC 11488 / FDC 602W) (Vibrio succinogenes), this protein is NADH-quinone oxidoreductase subunit H.